Reading from the N-terminus, the 108-residue chain is Small cysteine and glycine repeat-containing protein 8 (108 aa).

A 12 X 2 AA repeats of CG region spans residues 4-84 (CGCGGCGGGC…RRTCSSCGCG (81 aa)).

Belongs to the KRTAP type 28 family.

Its function is as follows. In the hair cortex, hair keratin intermediate filaments are embedded in an interfilamentous matrix, consisting of hair keratin-associated proteins (KRTAP), which are essential for the formation of a rigid and resistant hair shaft through their extensive disulfide bond cross-linking with abundant cysteine residues of hair keratins. The matrix proteins include the high-sulfur and high-glycine-tyrosine keratins. In Homo sapiens (Human), this protein is Small cysteine and glycine repeat-containing protein 8.